A 376-amino-acid polypeptide reads, in one-letter code: Putative glutamate--cysteine ligase 2-3 (376 aa).

The protein belongs to the glutamate--cysteine ligase type 2 family. YbdK subfamily.

The enzyme catalyses L-cysteine + L-glutamate + ATP = gamma-L-glutamyl-L-cysteine + ADP + phosphate + H(+). ATP-dependent carboxylate-amine ligase which exhibits weak glutamate--cysteine ligase activity. The polypeptide is Putative glutamate--cysteine ligase 2-3 (Nocardioides sp. (strain ATCC BAA-499 / JS614)).